Here is a 2485-residue protein sequence, read N- to C-terminus: Probable polyketide synthase 10 (2485 aa).

One can recognise a Ketosynthase family 3 (KS3) domain in the interval 8-447 (EDDIAIIGVG…GANCCIILSE (440 aa)). Residues C184, H325, and H363 each act as for beta-ketoacyl synthase activity in the active site. An acyl/malonyl transferase region spans residues 636–669 (GIEASFIVGHSLGEISAAHCSGMIDLETLCYIIY). S646 serves as the catalytic For acyl/malonyl transferase activity. The interval 930–1054 (PPITILGNES…GNFHISNNLF (125 aa)) is N-terminal hotdog fold. One can recognise a PKS/mFAS DH domain in the interval 930–1220 (PPITILGNES…SKSLTPIQDP (291 aa)). Catalysis depends on H964, which acts as the Proton acceptor; for dehydratase activity. The C-terminal hotdog fold stretch occupies residues 1071–1220 (NYSLIERDDL…SKSLTPIQDP (150 aa)). The Proton donor; for dehydratase activity role is filled by D1134. Residues 2410–2485 (ESNKGIDGLL…NQLIKFLNKK (76 aa)) form the Carrier domain. Position 2447 is an O-(pantetheine 4'-phosphoryl)serine (S2447).

Pantetheine 4'-phosphate is required as a cofactor.

Functionally, probable polyketide synthase. This Dictyostelium discoideum (Social amoeba) protein is Probable polyketide synthase 10 (pks10).